The chain runs to 131 residues: Capsid protein (131 aa).

2 residues coordinate Ca(2+): glutamine 2 and tyrosine 131.

The protein belongs to the Leviviricetes capsid protein family. As to quaternary structure, homodimer. The capsid proteins form dimers that assemble by group of 5. Twelve such pentamers are linked together with free dimers. The homodimers binds to the viral RNA via an operator hairpin, but also to many other RNA sequences in the viral genome; this interaction probably shifts the virus from the replicative to the assembly phase and ensures specific encapsidation of the viral genome.

Its subcellular location is the virion. In terms of biological role, capsid protein self-assembles to form an icosahedral capsid with a T=3 symmetry, about 26 nm in diameter, and consisting of 89 capsid proteins dimers (178 capsid proteins). Involved in viral genome encapsidation through the interaction between a capsid protein dimer and the multiple packaging signals present in the RNA genome. The capsid also contains 1 copy of the A2 maturation protein. Acts as a translational repressor of viral replicase synthesis late in infection. This latter function is the result of capsid protein interaction with an RNA hairpin which contains the replicase ribosome-binding site. The polypeptide is Capsid protein (Pseudomonas phage PRR1 (Bacteriophage PRR1)).